The chain runs to 30 residues: 80 kDa carcinoembryonic antigen-binding protein (30 aa).

Binds to carcinoembryonic antigen (CEA). The N-terminus is blocked.

It is found in the cell membrane. May play a role in the development of hepatic metastases from colorectal cancers. In Rattus norvegicus (Rat), this protein is 80 kDa carcinoembryonic antigen-binding protein.